Consider the following 434-residue polypeptide: CinA-like protein (434 aa).

It belongs to the CinA family.

The polypeptide is CinA-like protein (Mycobacterium avium (strain 104)).